The following is a 179-amino-acid chain: Large ribosomal subunit protein uL6 (179 aa).

The protein belongs to the universal ribosomal protein uL6 family. In terms of assembly, part of the 50S ribosomal subunit.

Functionally, this protein binds to the 23S rRNA, and is important in its secondary structure. It is located near the subunit interface in the base of the L7/L12 stalk, and near the tRNA binding site of the peptidyltransferase center. The protein is Large ribosomal subunit protein uL6 of Synechococcus sp. (strain RCC307).